The chain runs to 420 residues: S-adenosylmethionine synthase (420 aa).

Histidine 16 contacts ATP. Aspartate 18 serves as a coordination point for Mg(2+). Residue glutamate 44 coordinates K(+). Positions 57 and 100 each coordinate L-methionine. A flexible loop region spans residues 100–110 (QSPDIAQGVNT). ATP is bound by residues 175 to 177 (DGK), 251 to 252 (KF), aspartate 260, 266 to 267 (RK), alanine 283, and lysine 287. Aspartate 260 is an L-methionine binding site. An L-methionine-binding site is contributed by lysine 291.

Belongs to the AdoMet synthase family. As to quaternary structure, homotetramer; dimer of dimers. It depends on Mg(2+) as a cofactor. K(+) serves as cofactor.

It localises to the cytoplasm. The enzyme catalyses L-methionine + ATP + H2O = S-adenosyl-L-methionine + phosphate + diphosphate. It participates in amino-acid biosynthesis; S-adenosyl-L-methionine biosynthesis; S-adenosyl-L-methionine from L-methionine: step 1/1. Functionally, catalyzes the formation of S-adenosylmethionine (AdoMet) from methionine and ATP. The overall synthetic reaction is composed of two sequential steps, AdoMet formation and the subsequent tripolyphosphate hydrolysis which occurs prior to release of AdoMet from the enzyme. The sequence is that of S-adenosylmethionine synthase from Trichormus variabilis (strain ATCC 29413 / PCC 7937) (Anabaena variabilis).